Here is a 157-residue protein sequence, read N- to C-terminus: Peptide methionine sulfoxide reductase MsrA (157 aa).

Residue C10 is part of the active site.

This sequence belongs to the MsrA Met sulfoxide reductase family.

It catalyses the reaction L-methionyl-[protein] + [thioredoxin]-disulfide + H2O = L-methionyl-(S)-S-oxide-[protein] + [thioredoxin]-dithiol. It carries out the reaction [thioredoxin]-disulfide + L-methionine + H2O = L-methionine (S)-S-oxide + [thioredoxin]-dithiol. Functionally, has an important function as a repair enzyme for proteins that have been inactivated by oxidation. Catalyzes the reversible oxidation-reduction of methionine sulfoxide in proteins to methionine. This Clostridium botulinum (strain Hall / ATCC 3502 / NCTC 13319 / Type A) protein is Peptide methionine sulfoxide reductase MsrA.